Consider the following 281-residue polypeptide: MAIKKYKSTTNGRRNMTTIDYSAVLTTKNTPEKSLVVSKSSKAGRNNRGLITTRHKGGGHKQKYRIIDFKRNKRDIFGTISTIEYDPNRNAFICLVNYVDGEKRYILFAKGMQVGMKVVASENADIKVGNSAPLKNIPEGTLLHNVELKPGKGGQIARSAGSSVQLLGKDDDGRYVTLRLSSGEVRKVLSECYATIGEVGNEEYNLVNWGKAGRNRWRGIRPTVRGSVMNPNDHPHGGGEGRAPIGRKSPVTPWGKKALGVKTRNTKKASEKLIVRKRSKK.

Residues 223 to 255 (TVRGSVMNPNDHPHGGGEGRAPIGRKSPVTPWG) are disordered.

Belongs to the universal ribosomal protein uL2 family. Part of the 50S ribosomal subunit. Forms a bridge to the 30S subunit in the 70S ribosome.

One of the primary rRNA binding proteins. Required for association of the 30S and 50S subunits to form the 70S ribosome, for tRNA binding and peptide bond formation. It has been suggested to have peptidyltransferase activity; this is somewhat controversial. Makes several contacts with the 16S rRNA in the 70S ribosome. This Mycoplasma capricolum subsp. capricolum (strain California kid / ATCC 27343 / NCTC 10154) protein is Large ribosomal subunit protein uL2.